The following is a 276-amino-acid chain: Rhomboid protease GlpG (276 aa).

Transmembrane regions (helical) follow at residues 94–114 (GPVT…MQIL), 142–162 (ALMH…WYLG), 169–189 (LGSG…GYVQ), 192–212 (FSGP…GYVW), 229–249 (LIIF…GMSM), and 250–270 (ANGA…VDSL). Serine 201 acts as the Nucleophile in catalysis. Histidine 254 is an active-site residue.

Belongs to the peptidase S54 family.

The protein resides in the cell inner membrane. The catalysed reaction is Cleaves type-1 transmembrane domains using a catalytic dyad composed of serine and histidine that are contributed by different transmembrane domains.. Rhomboid-type serine protease that catalyzes intramembrane proteolysis. The sequence is that of Rhomboid protease GlpG from Escherichia coli (strain 55989 / EAEC).